Here is a 176-residue protein sequence, read N- to C-terminus: MLVNSLIVILSVIAMEGIAAFTHRYIMHGWGWRWHESHHTPRKGVFELNDLFAVVFAGVAIALIAVGTAGVWPLQWIGCGMTVYGLLYFLVHDGLVHQRWPFHWIPRRGYLKRLYVAHRLHHAVRGREGCVSFGFIYARKPADLQAILRERHGRPPKRDAAKDRPDAASPSSSSPE.

The region spanning 10–126 is the Fatty acid hydroxylase domain; that stretch reads LSVIAMEGIA…AHRLHHAVRG (117 aa). Residues 152-176 are disordered; that stretch reads HGRPPKRDAAKDRPDAASPSSSSPE. Residues 156–166 are compositionally biased toward basic and acidic residues; the sequence is PKRDAAKDRPD. Residues 167 to 176 show a composition bias toward low complexity; sequence AASPSSSSPE.

This sequence belongs to the sterol desaturase family.

Its pathway is carotenoid biosynthesis; zeaxanthin biosynthesis. Catalyzes the hydroxylation reaction from beta-carotene to zeaxanthin. In Pseudescherichia vulneris (Escherichia vulneris), this protein is Beta-carotene hydroxylase (crtZ).